The primary structure comprises 239 residues: tRNA (guanine-N(7)-)-methyltransferase (239 aa).

4 residues coordinate S-adenosyl-L-methionine: Glu69, Glu94, Asp121, and Asp144. Residue Asp144 is part of the active site. Lys148 is a substrate binding site. Residues 150-155 form an interaction with RNA region; that stretch reads RHNKRR. Residues Asp180 and 217–220 contribute to the substrate site; that span reads TKFE.

The protein belongs to the class I-like SAM-binding methyltransferase superfamily. TrmB family. In terms of assembly, monomer.

It carries out the reaction guanosine(46) in tRNA + S-adenosyl-L-methionine = N(7)-methylguanosine(46) in tRNA + S-adenosyl-L-homocysteine. It functions in the pathway tRNA modification; N(7)-methylguanine-tRNA biosynthesis. Catalyzes the formation of N(7)-methylguanine at position 46 (m7G46) in tRNA. The protein is tRNA (guanine-N(7)-)-methyltransferase of Shigella dysenteriae serotype 1 (strain Sd197).